Here is a 1120-residue protein sequence, read N- to C-terminus: Topless-related protein 1 (1120 aa).

In terms of domain architecture, LisH spans 4-36; it reads LSRELVFLILQFLDEEKFKETVHKLEQESGFFF. A CTLH domain is found at 34–92; that stretch reads FFFNMKYFEDEVHNGNWDEVEKYLSGFTKVDDNRYSMKIFFEIRKQKYLEALDRHDRPK. 2 disordered regions span residues 210–235 and 283–307; these read ARAPSPVNNPLLGSLPKAEGFPPLGA and HPRTPPSNSAVDYPSGDSDHVSKRT. At serine 214 the chain carries Phosphoserine. WD repeat units lie at residues 353–393, 415–454, 460–501, 504–545, 548–591, 595–634, 639–678, 699–745, 755–794, 822–860, 863–903, 906–945, 999–1038, and 1052–1091; these read SQGS…RLVQ, EPVVSVNRVIWSPDGSLFGVAYSRHIVQLYSYHGGEDMRQ, AHVG…KRYT, GHEA…SRVD, APGR…VKRT, FHKRSLGVVQFDTTKNRYLAAGDDFSIKFWDMDTIQLLTA, GGLQASPRIRFNKEGSLLAVSANDNMIKVMANSDGLRLLH, ERPA…EPSQ, MRVTKISRLIFTNSGNAILALASNAIHLLWKWQRNDRNAT, NPEEAVPCFALSKNDSYVMSASGGKISLFNMMTFKTMAT, PPPP…VKSK, GHSKRITGLAFSNVLNVLVSSGADAQLCVWNTDGWEKQKS, ESAAPITHATFSCDSQLIYTSFMDATICVFSSANLRLRCR, and SNVHPLVIAAHPQESNMFAVGLSDGGVHIFEPLESEGKWG. The segment at 1087-1120 is disordered; that stretch reads EGKWGVAPPPENGSASAVTATPSVGASASDQPQR. Residues 1099–1120 are compositionally biased toward polar residues; it reads GSASAVTATPSVGASASDQPQR.

Tetramer. Interacts with SNC1 (via TIR domain) and HDA19. Interacts with SPL (via EAR motif). Interacts with SPEAR3/TIE1. Binds to and corepresses GAF1/IDD2. In terms of tissue distribution, highly expressed in stamen primordium, microsporocyte, ovule primordium and megasporocyte during sporogenesis.

It localises to the nucleus. Transcriptional corepressor. Activates TIR-NB-LRR R protein-mediated immune responses through repression of negative regulators such as CNGC2/DND1. Negative regulator of jasmonate responses. The protein is Topless-related protein 1 (TPR1) of Arabidopsis thaliana (Mouse-ear cress).